Consider the following 442-residue polypeptide: Trigger factor (442 aa).

The PPIase FKBP-type domain occupies 176 to 259 (GDFISLSLYV…VNAVIEISSP (84 aa)).

This sequence belongs to the FKBP-type PPIase family. Tig subfamily.

The protein localises to the cytoplasm. It catalyses the reaction [protein]-peptidylproline (omega=180) = [protein]-peptidylproline (omega=0). Functionally, involved in protein export. Acts as a chaperone by maintaining the newly synthesized protein in an open conformation. Functions as a peptidyl-prolyl cis-trans isomerase. This chain is Trigger factor (tig), found in Chlamydia trachomatis serovar D (strain ATCC VR-885 / DSM 19411 / UW-3/Cx).